Consider the following 184-residue polypeptide: Ribosome maturation factor RimM (184 aa).

One can recognise a PRC barrel domain in the interval 104 to 184 (SEDEFYWREL…RIEVDWDPGF (81 aa)).

This sequence belongs to the RimM family. Binds ribosomal protein uS19.

It localises to the cytoplasm. An accessory protein needed during the final step in the assembly of 30S ribosomal subunit, possibly for assembly of the head region. Essential for efficient processing of 16S rRNA. May be needed both before and after RbfA during the maturation of 16S rRNA. It has affinity for free ribosomal 30S subunits but not for 70S ribosomes. In Vibrio atlanticus (strain LGP32) (Vibrio splendidus (strain Mel32)), this protein is Ribosome maturation factor RimM.